The following is a 1575-amino-acid chain: Ras GTPase-activating-like protein IQGAP2 (1575 aa).

A Phosphoserine modification is found at Ser-16. The Calponin-homology (CH) domain occupies 41-156 (LCHLEEAKRW…YCIHALSLYL (116 aa)). Thr-356 is subject to Phosphothreonine. Residues 594 to 627 (ESSEGSWVTLNVQEKYNYYYNTDSKEGSWVPPEL) enclose the WW domain. Phosphoserine occurs at positions 595 and 599. IQ domains are found at residues 690 to 719 (QTES…VFAG), 720 to 749 (NVDS…YFED), and 750 to 779 (HKNE…SENP). Thr-782, Thr-881, Thr-1002, and Thr-1269 each carry phosphothreonine. In terms of domain architecture, Ras-GAP spans 933–1182 (YLLLKLFKTA…QEFRKYFQEA (250 aa)). 2 positions are modified to phosphoserine: Ser-1279 and Ser-1461.

Functionally, binds to activated CDC42 and RAC1 but does not seem to stimulate their GTPase activity. Associates with calmodulin. This chain is Ras GTPase-activating-like protein IQGAP2 (Iqgap2), found in Mus musculus (Mouse).